The primary structure comprises 349 residues: Nuclear distribution protein nudE homolog 1 (349 aa).

A coiled-coil region spans residues 23-189 (AMKYKTCSEE…ELAVQQKQEK (167 aa)). Residues 182–201 (AVQQKQEKPKSNMGSPETER) are disordered.

This sequence belongs to the nudE family. Self-associates. Interacts with pafah1b1. In terms of processing, phosphorylated in mitosis.

The protein localises to the cytoplasm. It is found in the cytoskeleton. Its subcellular location is the microtubule organizing center. The protein resides in the centrosome. It localises to the spindle. The protein localises to the chromosome. It is found in the centromere. Its subcellular location is the kinetochore. The protein resides in the cleavage furrow. It localises to the cytoplasmic vesicle membrane. Its function is as follows. Required for centrosome duplication and formation and function of the mitotic spindle. This is Nuclear distribution protein nudE homolog 1 (nde1) from Xenopus tropicalis (Western clawed frog).